The following is a 150-amino-acid chain: 3-dehydroquinate dehydratase (150 aa).

The active-site Proton acceptor is the Tyr-23. Positions 75, 81, and 88 each coordinate substrate. His-101 acts as the Proton donor in catalysis. Residues 102 to 103 (LS) and Arg-112 contribute to the substrate site.

Belongs to the type-II 3-dehydroquinase family. In terms of assembly, homododecamer.

The enzyme catalyses 3-dehydroquinate = 3-dehydroshikimate + H2O. It participates in metabolic intermediate biosynthesis; chorismate biosynthesis; chorismate from D-erythrose 4-phosphate and phosphoenolpyruvate: step 3/7. Its function is as follows. Catalyzes a trans-dehydration via an enolate intermediate. This chain is 3-dehydroquinate dehydratase, found in Pseudomonas savastanoi pv. phaseolicola (strain 1448A / Race 6) (Pseudomonas syringae pv. phaseolicola (strain 1448A / Race 6)).